The sequence spans 509 residues: MVLPRLIPRLSRSAFKVAQANNRVFNAPFRGMASSAGVGSGKIRTVIGAVVDVQFEQDNLPAILNALTIDRGEGNKLVLEVAQHLGENTVRTIAMDGTEGLVRGTSVADTGAPITIPVGRGTLGRIINVCGEPIDERGPIEATKFLPIHADPPTFAEQSTTAEVLETGIKVVDLLAPYARGGKIGLFGGAGVGKTVFIQELINNIAKAHGGFSVFCGVGERTREGNDLYREMKETGVINLEGESKVTLVFGQMNEPPGARARVALTGLTIAEYFRDEEGQDVLLFVDNIFRFTQAGSEVSALLGRIPSAVGYQPTLATDMGALQERITTTQKGSVTSVQAVYVPADDLTDPAPATTFAHLDATTVLSRGISELGIYPAVDPLDSKSRLLDIDVVGQEHYDVASNVQQTLQAYKSLQDIIAILGMDELSEQDKLTVERARKIQRFLSQPFTVAEVFTGIEGRLVSLKDTVRSFKEILDGKHDALPEAAFYMVGGIEEVVAKAEKLAAESK.

The N-terminal 32 residues, Met-1–Met-32, are a transit peptide targeting the mitochondrion. Gly-189–Val-196 contacts ATP.

In terms of assembly, F-type ATP synthases have 2 components, the catalytic core F(1) and the membrane-embedded component F(0), linked together by a central stalk and a peripheral stalk. The central stalk, also called rotor shaft, is often seen as part of F(1). The peripheral stalk is seen as part of F(0). F(0) contains the membrane channel next to the rotor. F-type ATP synthases form dimers but each monomer functions independently in ATP generation. The dimer consists of 17 different polypeptides: ATP1 (subunit alpha, 3 molecules per monomer, part of F(1)), ATP2 (subunit beta, 3 copies per monomer, part of F(1)), ATP3 (subunit gamma, part of the central stalk), ATP4 (subunit b, part of the peripheral stalk), ATP5/OSCP (subunit 5/OSCP, part of the peripheral stalk), ATP6 (subunit a, part of the peripheral stalk), ATP7 (subunit d, part of the peripheral stalk), ATP8 (subunit 8, part of the peripheral stalk), OLI1 (subunit c, part of the rotor, 10 molecules per monomer), ATP14 (subunit h, part of the peripheral stalk), ATP15 (subunit epsilon, part of the central stalk), ATP16 (subunit delta, part of the central stalk), ATP17 (subunit f, part of the peripheral stalk), ATP18 (subunit i/j, part of the peripheral stalk), ATP19 (subunit k, dimer-specific, at interface between monomers), ATP20 (subunit g, at interface between monomers), TIM11 (subunit e, at interface between monomers).

It localises to the mitochondrion inner membrane. The catalysed reaction is ATP + H2O + 4 H(+)(in) = ADP + phosphate + 5 H(+)(out). Mitochondrial membrane ATP synthase (F(1)F(0) ATP synthase or Complex V) produces ATP from ADP in the presence of a proton gradient across the membrane which is generated by electron transport complexes of the respiratory chain. F-type ATP synthases consist of two structural domains, F(1) - containing the extramembraneous catalytic core, and F(0) - containing the membrane proton channel, linked together by a central stalk and a peripheral stalk. During catalysis, ATP synthesis in the catalytic domain of F(1) is coupled via a rotary mechanism of the central stalk subunits to proton translocation. Subunits alpha/ATP1 and beta/ATP2 form the catalytic core in F(1). Rotation of the central stalk against the surrounding alpha/ATP1(3)beta/ATP2(3) subunits leads to hydrolysis of ATP in three separate catalytic sites on the beta/ATP2 subunits. The sequence is that of ATP synthase subunit beta, mitochondrial from Yarrowia lipolytica (strain CLIB 122 / E 150) (Yeast).